The chain runs to 359 residues: Ribosomal RNA large subunit methyltransferase M (359 aa).

Residues S186, 219–222 (CPGG), D238, D258, and D275 each bind S-adenosyl-L-methionine. The active-site Proton acceptor is the K304.

This sequence belongs to the class I-like SAM-binding methyltransferase superfamily. RNA methyltransferase RlmE family. RlmM subfamily. Monomer.

The protein localises to the cytoplasm. It catalyses the reaction cytidine(2498) in 23S rRNA + S-adenosyl-L-methionine = 2'-O-methylcytidine(2498) in 23S rRNA + S-adenosyl-L-homocysteine + H(+). In terms of biological role, catalyzes the 2'-O-methylation at nucleotide C2498 in 23S rRNA. In Vibrio vulnificus (strain YJ016), this protein is Ribosomal RNA large subunit methyltransferase M.